A 152-amino-acid chain; its full sequence is Large ribosomal subunit protein uL15 (152 aa).

The protein belongs to the universal ribosomal protein uL15 family. As to quaternary structure, part of the 50S ribosomal subunit.

Functionally, binds to the 23S rRNA. In Staphylothermus marinus (strain ATCC 43588 / DSM 3639 / JCM 9404 / F1), this protein is Large ribosomal subunit protein uL15.